The following is a 432-amino-acid chain: Glutamate-1-semialdehyde 2,1-aminomutase (432 aa).

At K271 the chain carries N6-(pyridoxal phosphate)lysine.

It belongs to the class-III pyridoxal-phosphate-dependent aminotransferase family. HemL subfamily. In terms of assembly, homodimer. The cofactor is pyridoxal 5'-phosphate.

Its subcellular location is the cytoplasm. It carries out the reaction (S)-4-amino-5-oxopentanoate = 5-aminolevulinate. Its pathway is porphyrin-containing compound metabolism; protoporphyrin-IX biosynthesis; 5-aminolevulinate from L-glutamyl-tRNA(Glu): step 2/2. This chain is Glutamate-1-semialdehyde 2,1-aminomutase, found in Protochlamydia amoebophila (strain UWE25).